Reading from the N-terminus, the 264-residue chain is Methylthioribulose-1-phosphate dehydratase (264 aa).

Cysteine 110 provides a ligand contact to substrate. The Zn(2+) site is built by histidine 128 and histidine 130. The active-site Proton donor/acceptor is glutamate 151. Histidine 213 serves as a coordination point for Zn(2+).

This sequence belongs to the aldolase class II family. MtnB subfamily. Zn(2+) is required as a cofactor.

The protein resides in the cytoplasm. It catalyses the reaction 5-(methylsulfanyl)-D-ribulose 1-phosphate = 5-methylsulfanyl-2,3-dioxopentyl phosphate + H2O. Its pathway is amino-acid biosynthesis; L-methionine biosynthesis via salvage pathway; L-methionine from S-methyl-5-thio-alpha-D-ribose 1-phosphate: step 2/6. Catalyzes the dehydration of methylthioribulose-1-phosphate (MTRu-1-P) into 2,3-diketo-5-methylthiopentyl-1-phosphate (DK-MTP-1-P). This is Methylthioribulose-1-phosphate dehydratase from Vanderwaltozyma polyspora (strain ATCC 22028 / DSM 70294 / BCRC 21397 / CBS 2163 / NBRC 10782 / NRRL Y-8283 / UCD 57-17) (Kluyveromyces polysporus).